Here is a 71-residue protein sequence, read N- to C-terminus: Translational regulator CsrA (71 aa).

It belongs to the CsrA/RsmA family. As to quaternary structure, homodimer; the beta-strands of each monomer intercalate to form a hydrophobic core, while the alpha-helices form wings that extend away from the core.

The protein resides in the cytoplasm. Functionally, a translational regulator that binds mRNA to regulate translation initiation and/or mRNA stability. Usually binds in the 5'-UTR at or near the Shine-Dalgarno sequence preventing ribosome-binding, thus repressing translation. Its main target seems to be the major flagellin gene, while its function is anatagonized by FliW. The polypeptide is Translational regulator CsrA (Clostridium botulinum (strain Alaska E43 / Type E3)).